Consider the following 378-residue polypeptide: Beta sliding clamp (378 aa).

It belongs to the beta sliding clamp family. Forms a ring-shaped head-to-tail homodimer around DNA which binds and tethers DNA polymerases and other proteins to the DNA. The DNA replisome complex has a single clamp-loading complex (3 tau and 1 each of delta, delta', psi and chi subunits) which binds 3 Pol III cores (1 core on the leading strand and 2 on the lagging strand) each with a beta sliding clamp dimer. Additional proteins in the replisome are other copies of gamma, psi and chi, Ssb, DNA helicase and RNA primase. Interacts with YabA, and via YabA, with DnaA. During sporulation probably interacts with SirA.

It is found in the cytoplasm. The protein resides in the nucleoid. Confers DNA tethering and processivity to DNA polymerases and other proteins. Acts as a clamp, forming a ring around DNA (a reaction catalyzed by the clamp-loading complex) which diffuses in an ATP-independent manner freely and bidirectionally along dsDNA. Initially characterized for its ability to contact the catalytic subunit of DNA polymerase III (Pol III), a complex, multichain enzyme responsible for most of the replicative synthesis in bacteria; Pol III exhibits 3'-5' exonuclease proofreading activity. The beta chain is required for initiation of replication as well as for processivity of DNA replication. Overexpression in vivo stimulates inititation of DNA replication from oriC. Increased levels of DnaN remove YabA from its association with DnaA on the chromosome, allowing DnaA to bind to its targets. Its interaction with DnaA probably serves as a sink to prevent excessive replication initiation. This is Beta sliding clamp from Bacillus subtilis (strain 168).